A 67-amino-acid chain; its full sequence is Large ribosomal subunit protein bL31 (67 aa).

This sequence belongs to the bacterial ribosomal protein bL31 family. Type A subfamily. Part of the 50S ribosomal subunit.

In terms of biological role, binds the 23S rRNA. The polypeptide is Large ribosomal subunit protein bL31 (Helicobacter acinonychis (strain Sheeba)).